Here is a 31-residue protein sequence, read N- to C-terminus: Scolopendra 4610.56 Da toxin (31 aa).

It belongs to the scolopendra toxin 1 family. Post-translationally, contains one or more disulfide bonds. In terms of tissue distribution, expressed by the venom gland.

It is found in the secreted. The chain is Scolopendra 4610.56 Da toxin from Scolopendra viridicornis nigra (Brazilian giant centipede).